The following is a 377-amino-acid chain: NIF3-like protein 1 (377 aa).

Position 109 is an N6-acetyllysine (Lys-109). A mediates interaction with COPS2 region spans residues 244 to 377; that stretch reads LLLHTGMGRL…ETDRDPLQVV (134 aa). Phosphothreonine is present on Thr-255. A Phosphoserine modification is found at Ser-259.

It belongs to the GTP cyclohydrolase I type 2/NIF3 family. As to quaternary structure, homodimer. Interacts with COPS2. Interacts with THOC7.

The protein resides in the cytoplasm. It is found in the nucleus. In terms of biological role, may function as a transcriptional corepressor through its interaction with COPS2, negatively regulating the expression of genes involved in neuronal differentiation. This Homo sapiens (Human) protein is NIF3-like protein 1.